The primary structure comprises 747 residues: uncharacterized protein (747 aa).

Residues 7–27 (FFLKVISVIAPIVIIPTILAN) traverse the membrane as a helical segment.

It localises to the membrane. This is an uncharacterized protein from Ureaplasma parvum serovar 3 (strain ATCC 700970).